We begin with the raw amino-acid sequence, 178 residues long: Large ribosomal subunit protein uL5 (178 aa).

Belongs to the universal ribosomal protein uL5 family. Part of the 50S ribosomal subunit; part of the 5S rRNA/L5/L18/L25 subcomplex. Contacts the 5S rRNA and the P site tRNA. Forms a bridge to the 30S subunit in the 70S ribosome.

This is one of the proteins that bind and probably mediate the attachment of the 5S RNA into the large ribosomal subunit, where it forms part of the central protuberance. In the 70S ribosome it contacts protein S13 of the 30S subunit (bridge B1b), connecting the 2 subunits; this bridge is implicated in subunit movement. Contacts the P site tRNA; the 5S rRNA and some of its associated proteins might help stabilize positioning of ribosome-bound tRNAs. The sequence is that of Large ribosomal subunit protein uL5 from Psychrobacter arcticus (strain DSM 17307 / VKM B-2377 / 273-4).